The primary structure comprises 201 residues: Thylakoid membrane protein slr1796 (201 aa).

The helical transmembrane segment at 16–36 threads the bilayer; the sequence is FLIVSLAFAMLLLGIWGTLPF.

It localises to the cellular thylakoid membrane. This Synechocystis sp. (strain ATCC 27184 / PCC 6803 / Kazusa) protein is Thylakoid membrane protein slr1796.